The sequence spans 490 residues: UDP-glucosyl transferase 73M2 (490 aa).

His20 (proton acceptor) is an active-site residue. The active-site Charge relay is the Asp124. Ser297, Trp353, Ala354, His371, Asn375, Ser376, Glu379, and Tyr393 together coordinate UDP.

The protein belongs to the UDP-glycosyltransferase family. Mainly expressed in flowers, flower buds and young leaves, and, to a lesser extent, in old leaves, stems and roots.

The protein operates within secondary metabolite biosynthesis; terpenoid biosynthesis. In terms of biological role, component of the oleanane-type triterpene saponins (e.g. saponarioside A and saponarioside B) biosynthetic pathway, leading to the production of natural products with detergent properties used as traditional sources of soap. A glycosyltransferase that mediates the conversion of QA-triFRX to QA-triFRXX via the elongation of the C-28 sugar chain with a D-xylose. The polypeptide is UDP-glucosyl transferase 73M2 (Saponaria officinalis (Common soapwort)).